The following is a 233-amino-acid chain: Riboflavin kinase (233 aa).

The tract at residues 1 to 104 (MVRDIKTFKF…YKKIFDDEGT (104 aa)) is H-T-H motif-like. Residues 105–233 (IKIKGEVFSG…GDFVEVEVIL (129 aa)) form a riboflavin kinase region. 114–119 (GVGEGR) contacts CDP. Residues threonine 143 and asparagine 145 each coordinate Mg(2+). FMN contacts are provided by threonine 200 and glutamate 208. Position 213–216 (213–216 (VKLR)) interacts with CDP.

The protein belongs to the archaeal riboflavin kinase family. It depends on Mg(2+) as a cofactor.

It catalyses the reaction riboflavin + CTP = CDP + FMN + H(+). Its pathway is cofactor biosynthesis; FMN biosynthesis; FMN from riboflavin (CTP route): step 1/1. Catalyzes the CTP-dependent phosphorylation of riboflavin (vitamin B2) to form flavin mononucleotide (FMN). This chain is Riboflavin kinase (ribK), found in Archaeoglobus fulgidus (strain ATCC 49558 / DSM 4304 / JCM 9628 / NBRC 100126 / VC-16).